The primary structure comprises 68 residues: Protein SlyX homolog (68 aa).

It belongs to the SlyX family.

The chain is Protein SlyX homolog from Pseudomonas fluorescens (strain Pf0-1).